An 801-amino-acid polypeptide reads, in one-letter code: Phenylalanine--tRNA ligase beta subunit (801 aa).

The tRNA-binding domain maps to 39–152 (ARAFSGVVVG…TDAPIGTDIR (114 aa)). The 76-residue stretch at 407–482 (PARAPITLPI…RIYGYDNIPS (76 aa)) folds into the B5 domain. Residues D460, D466, E469, and E470 each contribute to the Mg(2+) site. Positions 706-799 (SKFPQVRRDI…LTVEHSAQLR (94 aa)) constitute an FDX-ACB domain.

This sequence belongs to the phenylalanyl-tRNA synthetase beta subunit family. Type 1 subfamily. In terms of assembly, tetramer of two alpha and two beta subunits. Requires Mg(2+) as cofactor.

It is found in the cytoplasm. It catalyses the reaction tRNA(Phe) + L-phenylalanine + ATP = L-phenylalanyl-tRNA(Phe) + AMP + diphosphate + H(+). This chain is Phenylalanine--tRNA ligase beta subunit, found in Psychrobacter arcticus (strain DSM 17307 / VKM B-2377 / 273-4).